We begin with the raw amino-acid sequence, 127 residues long: MAELIQKKLQGEVEKYQQLQKDLSKSMSGRQKLEAQLTENNIVKEELALLDGSNVVFKLLGPVLVKQELGEARATVGKRLDYITAEIKRYESQLRDLERQSEQQRETLAQLQQEFQRAQAAKAPGKA.

An N-acetylalanine modification is found at Ala-2. Lys-21 is modified (N6-acetyllysine). The residue at position 66 (Lys-66) is an N6-acetyllysine; alternate. Residue Lys-66 forms a Glycyl lysine isopeptide (Lys-Gly) (interchain with G-Cter in SUMO1); alternate linkage. Lys-66 participates in a covalent cross-link: Glycyl lysine isopeptide (Lys-Gly) (interchain with G-Cter in SUMO2); alternate.

This sequence belongs to the prefoldin subunit beta family. In terms of assembly, heterohexamer of two PFD-alpha type and four PFD-beta type subunits. Component of the PAQosome complex which is responsible for the biogenesis of several protein complexes and which consists of R2TP complex members RUVBL1, RUVBL2, RPAP3 and PIH1D1, URI complex members PFDN2, PFDN6, PDRG1, UXT and URI1 as well as ASDURF, POLR2E and DNAAF10/WDR92.

Its function is as follows. Binds specifically to cytosolic chaperonin (c-CPN) and transfers target proteins to it. Binds to nascent polypeptide chain and promotes folding in an environment in which there are many competing pathways for nonnative proteins. In Mus musculus (Mouse), this protein is Prefoldin subunit 6 (Pfdn6).